Here is a 449-residue protein sequence, read N- to C-terminus: Naphthalene 1,2-dioxygenase system, large oxygenase component (449 aa).

Residues 39-137 form the Rieske domain; sequence WLFLTHDSLI…LDKKCMGLKE (99 aa). [2Fe-2S] cluster contacts are provided by C81, H83, C101, and H104. Residues H208, H213, and D362 each contribute to the Fe cation site.

It belongs to the bacterial ring-hydroxylating dioxygenase alpha subunit family. In terms of assembly, the naphthalene dioxygenase (NDO) multicomponent enzyme system is composed of an electron transfer component and a dioxygenase component (iron sulfur protein (ISP)). The electron transfer component is composed of a ferredoxin reductase (NdoR) and a ferredoxin (NdoA), and the dioxygenase component is formed of a heterohexamer (trimer of heterodimers) of three large alpha subunits (NdoB) and three small beta subunits (NdoC). It depends on [2Fe-2S] cluster as a cofactor. The cofactor is Fe(2+).

The catalysed reaction is naphthalene + NADH + O2 + H(+) = (1R,2S)-1,2-dihydronaphthalene-1,2-diol + NAD(+). It functions in the pathway aromatic compound metabolism; naphthalene degradation. Component of the naphthalene dioxygenase (NDO) multicomponent enzyme system which catalyzes the incorporation of both atoms of molecular oxygen into naphthalene to form cis-(1R,2S)-dihydroxy-1,2-dihydronaphthalene. The alpha subunit has a catalytic role in the holoenzyme. In Pseudomonas aeruginosa, this protein is Naphthalene 1,2-dioxygenase system, large oxygenase component.